We begin with the raw amino-acid sequence, 567 residues long: Sensor histidine kinase MtrB (567 aa).

Over residues 1 to 15 (MIFGSRRRIRGRRGR) the composition is skewed to basic residues. A disordered region spans residues 1 to 20 (MIFGSRRRIRGRRGRSGPMT). 2 helical membrane-spanning segments follow: residues 42 to 62 (VVAL…FVLT) and 213 to 233 (GTMA…ALLV). The HAMP domain maps to 235-287 (RQVVVPVRSASRIAERFAEGHLSERMPVRGEDDMARLAVSFNDMAESLSRQIA). One can recognise a Histidine kinase domain in the interval 302–519 (DVSHELRTPL…CFRLTLPMVR (218 aa)). Phosphohistidine; by autocatalysis is present on His305. A compositionally biased stretch (pro residues) spans 529–551 (PMKPIPQPVLQPVAQPNPQPMPP). Residues 529-567 (PMKPIPQPVLQPVAQPNPQPMPPEYKERQRPREHAEWSG) form a disordered region. The segment covering 552–567 (EYKERQRPREHAEWSG) has biased composition (basic and acidic residues).

Interacts with MrtA. Interacts with LpqB, probably extracytoplasmically via MtrB's sensor domain. It depends on Mg(2+) as a cofactor. Ca(2+) is required as a cofactor. Post-translationally, the C-terminal domain (residues 234-567) autophosphorylates.

It localises to the cell membrane. It carries out the reaction ATP + protein L-histidine = ADP + protein N-phospho-L-histidine.. Its activity is regulated as follows. Ca(2+) ions inhibit the phosphotransfer from MtrB to MtrA. In terms of biological role, member of the two-component regulatory system MtrA/MtrB. Probably functions as a membrane-associated protein kinase that phosphorylates MtrA in response to environmental signals. Autophosphorylates and transfers phosphate to MtrA in vitro. Overexpression of MtrA alone decreases bacterial virulence in mouse infection; co-expression of MtrA and MtrB restores normal bacterial growth, suggesting that bacterial growth in macrophages requires an optimal ratio of MtrB to MtrA. Probably plays a role in cell division. The chain is Sensor histidine kinase MtrB (mtrB) from Mycobacterium tuberculosis (strain ATCC 25618 / H37Rv).